Here is a 241-residue protein sequence, read N- to C-terminus: Glucosamine-6-phosphate deaminase (241 aa).

Residue D67 is the Proton acceptor; for enolization step of the active site. Residue N136 is the For ring-opening step of the active site. H138 serves as the catalytic Proton acceptor; for ring-opening step. Catalysis depends on E143, which acts as the For ring-opening step.

This sequence belongs to the glucosamine/galactosamine-6-phosphate isomerase family. NagB subfamily.

It catalyses the reaction alpha-D-glucosamine 6-phosphate + H2O = beta-D-fructose 6-phosphate + NH4(+). The protein operates within amino-sugar metabolism; N-acetylneuraminate degradation; D-fructose 6-phosphate from N-acetylneuraminate: step 5/5. In terms of biological role, catalyzes the reversible isomerization-deamination of glucosamine 6-phosphate (GlcN6P) to form fructose 6-phosphate (Fru6P) and ammonium ion. The chain is Glucosamine-6-phosphate deaminase from Clostridium acetobutylicum (strain ATCC 824 / DSM 792 / JCM 1419 / IAM 19013 / LMG 5710 / NBRC 13948 / NRRL B-527 / VKM B-1787 / 2291 / W).